Here is a 196-residue protein sequence, read N- to C-terminus: ATP-dependent Clp protease proteolytic subunit (196 aa).

Residue serine 101 is the Nucleophile of the active site. Histidine 126 is an active-site residue.

It belongs to the peptidase S14 family. As to quaternary structure, component of the chloroplastic Clp protease core complex.

Its subcellular location is the plastid. It is found in the chloroplast stroma. The enzyme catalyses Hydrolysis of proteins to small peptides in the presence of ATP and magnesium. alpha-casein is the usual test substrate. In the absence of ATP, only oligopeptides shorter than five residues are hydrolyzed (such as succinyl-Leu-Tyr-|-NHMec, and Leu-Tyr-Leu-|-Tyr-Trp, in which cleavage of the -Tyr-|-Leu- and -Tyr-|-Trp bonds also occurs).. Functionally, cleaves peptides in various proteins in a process that requires ATP hydrolysis. Has a chymotrypsin-like activity. Plays a major role in the degradation of misfolded proteins. In Spinacia oleracea (Spinach), this protein is ATP-dependent Clp protease proteolytic subunit.